Reading from the N-terminus, the 197-residue chain is Imidazoleglycerol-phosphate dehydratase (197 aa).

This sequence belongs to the imidazoleglycerol-phosphate dehydratase family.

The protein localises to the cytoplasm. It carries out the reaction D-erythro-1-(imidazol-4-yl)glycerol 3-phosphate = 3-(imidazol-4-yl)-2-oxopropyl phosphate + H2O. It participates in amino-acid biosynthesis; L-histidine biosynthesis; L-histidine from 5-phospho-alpha-D-ribose 1-diphosphate: step 6/9. This Marinomonas sp. (strain MWYL1) protein is Imidazoleglycerol-phosphate dehydratase.